The following is a 426-amino-acid chain: MLDSKLLRGQLQEVADRLASRGFSLDVARIESLEERRKAVQTRTEQLQAERNARSKSIGQAKAKGEDIAPLMADVERMANELAAGKVELDGIQAELDGIVLTIPNLPDASVPVGASEDDNVEVRRWGTPRAFDFAIKDHVALGEISGGLDFEAAAKLSGARFAVLRGPIARLHRALAQFMINLHTGEHGYEEHYTPYLVQAPALQGTGQLPKFEEDLFKITREGEADFYLIPTAEVSLTNLVAGEIIDAKQLPLKLVAHTPCFRSEAGASGRDTRGMIRQHQFDKVEMVQVVEPSKSMEALEGLTANAERVLQLLELPYRVLALCTGDMGFGAVKTYDLEVWVPSQDKYREISSCSNCGDFQARRMQARWRNPETGKPELVHTLNGSGLAVGRTLVAVLENYQQADGSIRVPEVLKPYMGGVEVIR.

233 to 235 contributes to the L-serine binding site; the sequence is TAE. Residue 264–266 coordinates ATP; it reads RSE. Glu287 serves as a coordination point for L-serine. 351–354 provides a ligand contact to ATP; that stretch reads EISS. Ser387 is a binding site for L-serine.

Belongs to the class-II aminoacyl-tRNA synthetase family. Type-1 seryl-tRNA synthetase subfamily. Homodimer. The tRNA molecule binds across the dimer.

It localises to the cytoplasm. It catalyses the reaction tRNA(Ser) + L-serine + ATP = L-seryl-tRNA(Ser) + AMP + diphosphate + H(+). The catalysed reaction is tRNA(Sec) + L-serine + ATP = L-seryl-tRNA(Sec) + AMP + diphosphate + H(+). The protein operates within aminoacyl-tRNA biosynthesis; selenocysteinyl-tRNA(Sec) biosynthesis; L-seryl-tRNA(Sec) from L-serine and tRNA(Sec): step 1/1. In terms of biological role, catalyzes the attachment of serine to tRNA(Ser). Is also able to aminoacylate tRNA(Sec) with serine, to form the misacylated tRNA L-seryl-tRNA(Sec), which will be further converted into selenocysteinyl-tRNA(Sec). This is Serine--tRNA ligase from Pseudomonas putida (strain W619).